A 357-amino-acid chain; its full sequence is MLLSLIVTFLGAFLTLLFMRPIAQKIGLVDKPNFRKRHQGAIPLIGGVSLFVGNLCFYLLEWEQMRLPTLYLFSIFVLLVIGMIDDRFDISPFLRAGIQAILAILMIDLGNLYLDHLGQILGPFQLTLGSIGLIITVLATIAAINAFNMIDGIDGLLGGLSSVAFVSIGILLIKDNQLDLAYWSFALIIAILPYFMMNLGIPFGQKFKVFMGDAGSTLIGFTIIWILLLSTQGKGHPMNPVTALWIIAIPLIDMIAIMYRRLRKGKSPFRPDRLHVHHLMMRAGLTSRQAFLLITFAAAICATIGILGEIFYINEWLMFAGFILLFFMYSYSITRAWRITRWIRRMRRRAKRIHNKG.

Helical transmembrane passes span 40 to 60, 64 to 84, 124 to 144, 183 to 203, 209 to 229, 238 to 258, and 291 to 311; these read GAIPLIGGVSLFVGNLCFYLL, QMRLPTLYLFSIFVLLVIGMI, FQLTLGSIGLIITVLATIAAI, WSFALIIAILPYFMMNLGIPF, VFMGDAGSTLIGFTIIWILLL, MNPVTALWIIAIPLIDMIAIM, and FLLITFAAAICATIGILGEIF.

The protein belongs to the glycosyltransferase 4 family. WecA subfamily. The cofactor is Mg(2+). Mn(2+) serves as cofactor.

The protein localises to the cell inner membrane. It catalyses the reaction di-trans,octa-cis-undecaprenyl phosphate + UDP-N-acetyl-alpha-D-glucosamine = N-acetyl-alpha-D-glucosaminyl-di-trans,octa-cis-undecaprenyl diphosphate + UMP. Its pathway is bacterial outer membrane biogenesis; LPS O-antigen biosynthesis. Its function is as follows. Catalyzes the transfer of the GlcNAc-1-phosphate moiety from UDP-GlcNAc onto the carrier lipid undecaprenyl phosphate (C55-P), yielding GlcNAc-pyrophosphoryl-undecaprenyl (GlcNAc-PP-C55). This is Undecaprenyl-phosphate alpha-N-acetylglucosaminyl 1-phosphate transferase from Pasteurella multocida (strain Pm70).